Reading from the N-terminus, the 208-residue chain is Na(+)-translocating NADH-quinone reductase subunit D (208 aa).

A run of 5 helical transmembrane segments spans residues 42 to 62 (IVMT…ISLI), 70 to 90 (VRII…DQIL), 103 to 123 (VFVG…AFAM), 131 to 151 (FVDG…VAFI), and 178 to 198 (NGLF…IWGI).

It belongs to the NqrDE/RnfAE family. As to quaternary structure, composed of six subunits; NqrA, NqrB, NqrC, NqrD, NqrE and NqrF.

It is found in the cell inner membrane. It catalyses the reaction a ubiquinone + n Na(+)(in) + NADH + H(+) = a ubiquinol + n Na(+)(out) + NAD(+). In terms of biological role, NQR complex catalyzes the reduction of ubiquinone-1 to ubiquinol by two successive reactions, coupled with the transport of Na(+) ions from the cytoplasm to the periplasm. NqrA to NqrE are probably involved in the second step, the conversion of ubisemiquinone to ubiquinol. The protein is Na(+)-translocating NADH-quinone reductase subunit D of Pasteurella multocida (strain Pm70).